The following is a 178-amino-acid chain: Ribosome maturation factor RimM (178 aa).

One can recognise a PRC barrel domain in the interval 101–178; sequence EGEFYWYQLQ…EMRVDWDADF (78 aa).

Belongs to the RimM family. As to quaternary structure, binds ribosomal protein uS19.

It is found in the cytoplasm. Its function is as follows. An accessory protein needed during the final step in the assembly of 30S ribosomal subunit, possibly for assembly of the head region. Essential for efficient processing of 16S rRNA. May be needed both before and after RbfA during the maturation of 16S rRNA. It has affinity for free ribosomal 30S subunits but not for 70S ribosomes. This is Ribosome maturation factor RimM from Ectopseudomonas mendocina (strain ymp) (Pseudomonas mendocina).